The sequence spans 463 residues: L-seryl-tRNA(Sec) selenium transferase (463 aa).

Residue Lys295 is modified to N6-(pyridoxal phosphate)lysine.

Belongs to the SelA family. Homodecamer; pentamer of dimers. Binds only one seryl-tRNA(Sec) per dimer. Requires pyridoxal 5'-phosphate as cofactor.

Its subcellular location is the cytoplasm. It catalyses the reaction L-seryl-tRNA(Sec) + selenophosphate + H(+) = L-selenocysteinyl-tRNA(Sec) + phosphate. It functions in the pathway aminoacyl-tRNA biosynthesis; selenocysteinyl-tRNA(Sec) biosynthesis; selenocysteinyl-tRNA(Sec) from L-seryl-tRNA(Sec) (bacterial route): step 1/1. Functionally, converts seryl-tRNA(Sec) to selenocysteinyl-tRNA(Sec) required for selenoprotein biosynthesis. The chain is L-seryl-tRNA(Sec) selenium transferase from Shigella boydii serotype 4 (strain Sb227).